We begin with the raw amino-acid sequence, 372 residues long: Trihelix transcription factor GT-4 (372 aa).

Residues 47–111 form the Myb-like domain; the sequence is APKKRAETWA…MCTDKWRNIL (65 aa). Position 167 is a phosphoserine (Ser167).

The protein localises to the nucleus. Probable transcription factor that binds specific DNA sequence. The polypeptide is Trihelix transcription factor GT-4 (GT-4) (Arabidopsis thaliana (Mouse-ear cress)).